A 292-amino-acid polypeptide reads, in one-letter code: MVAFVWLPRNGVSWTVVLPLKNLTRAKTRLDRPDRSRLALAMALDTVMAVLESETDLVGAVMIVTNDRTADHALSTLLNSHYIGADQPNLSPAARSARLVVIPDEPDRGLNPALVHGAALASARWPTRAVAALSADLPALRPPELHQALSEASQHRRAVLADATGTGTVLLTASAGATLQPAFGPHSHATHRRSGAVDLTGTLGGSVPGLRRDVDTLADLAQARDLGVGRATRAALTAGYHSPLVAEDSGGSGGESGTSAESGLSVPPGIVGGTQRRIVSDASGPGRAKKYP.

Threonine 168, glycine 184, and serine 187 together coordinate phosphoenolpyruvate. Residues 243–292 (PLVAEDSGGSGGESGTSAESGLSVPPGIVGGTQRRIVSDASGPGRAKKYP) are disordered.

Belongs to the CofC family.

It carries out the reaction phosphoenolpyruvate + GTP + H(+) = enolpyruvoyl-2-diphospho-5'-guanosine + diphosphate. It functions in the pathway cofactor biosynthesis; coenzyme F420 biosynthesis. Guanylyltransferase that catalyzes the activation of phosphoenolpyruvate (PEP) as enolpyruvoyl-2-diphospho-5'-guanosine, via the condensation of PEP with GTP. It is involved in the biosynthesis of coenzyme F420, a hydride carrier cofactor. The polypeptide is Phosphoenolpyruvate guanylyltransferase (Frankia casuarinae (strain DSM 45818 / CECT 9043 / HFP020203 / CcI3)).